A 508-amino-acid chain; its full sequence is Flavonoid 3',5'-hydroxylase 2 (508 aa).

Cys443 lines the heme pocket.

Belongs to the cytochrome P450 family. Requires heme as cofactor. As to expression, flowers.

It is found in the microsome. Its subcellular location is the endoplasmic reticulum. The catalysed reaction is a 3',5'-unsubstituted flavanone + 2 reduced [NADPH--hemoprotein reductase] + 2 O2 = a 3',5'-dihydroxyflavanone + 2 oxidized [NADPH--hemoprotein reductase] + 2 H2O + 2 H(+). Its pathway is pigment biosynthesis; anthocyanin biosynthesis. Catalyzes the 3'5'-hydroxylation of naringenin and eriodictyol to form 5,7,3,'4',5'-pentahydroxyflavanone and 3',5'-hydroxylation of dihydrokaempferol and dihydroquercetin to form dihydromyricetin. The protein is Flavonoid 3',5'-hydroxylase 2 (CYP75A3) of Petunia hybrida (Petunia).